We begin with the raw amino-acid sequence, 138 residues long: uncharacterized protein (138 aa).

Helical transmembrane passes span 17–37 (LIVSTIYIVLFFAILNLTVFF), 43–63 (INLILKNSCVVSFVVVWLLVC), and 117–137 (FWWMNFSLYLLGSLISIVVSL).

The protein resides in the cell membrane. This is an uncharacterized protein from Mycoplasma pneumoniae (strain ATCC 29342 / M129 / Subtype 1) (Mycoplasmoides pneumoniae).